Reading from the N-terminus, the 420-residue chain is Serine/threonine-protein phosphatase 4 regulatory subunit 2-A (420 aa).

The segment at 157–420 is disordered; it reads GNTSAFPDRN…ETADDNMEQD (264 aa). The span at 182–195 shows a compositional bias: polar residues; sequence SLSSNVATNGLPDS. Residues 196–210 are compositionally biased toward basic and acidic residues; it reads TESKEQASEQSERTV. Residues 212-224 are compositionally biased toward low complexity; the sequence is ESSASEAESHSGA. Positions 229 to 250 are enriched in basic and acidic residues; the sequence is HRDDEDATHAETHEAKRLKFDK. The span at 251–266 shows a compositional bias: acidic residues; it reads EEEEEEDDEEEDEDGD. Over residues 267–276 the composition is skewed to basic and acidic residues; the sequence is EIKKELDEPH. Residues 278-296 are compositionally biased toward polar residues; it reads PCTSVAESSSDVPQSSTDV. A compositionally biased stretch (basic and acidic residues) spans 318 to 332; that stretch reads GVDRSTSEDSPDPSH. Positions 346–364 are enriched in acidic residues; sequence AEEEEEEESAEAQETEETN. The segment covering 368–394 has biased composition (low complexity); that stretch reads SSSSNNSSDEGVSSAETPSASPSSSTE. The span at 411-420 shows a compositional bias: acidic residues; sequence ETADDNMEQD.

This sequence belongs to the PPP4R2 family. As to quaternary structure, serine/threonine-protein phosphatase 4 (PP4) occurs in different assemblies of the catalytic and one or more regulatory subunits.

Regulatory subunit of serine/threonine-protein phosphatase 4 (PP4C). The chain is Serine/threonine-protein phosphatase 4 regulatory subunit 2-A (ppp4r2a) from Danio rerio (Zebrafish).